The chain runs to 421 residues: Tol-Pal system protein TolB (421 aa).

A signal peptide spans 1 to 16 (MRILVFLWLGLSSLFA).

Belongs to the TolB family. The Tol-Pal system is composed of five core proteins: the inner membrane proteins TolA, TolQ and TolR, the periplasmic protein TolB and the outer membrane protein Pal. They form a network linking the inner and outer membranes and the peptidoglycan layer.

Its subcellular location is the periplasm. In terms of biological role, part of the Tol-Pal system, which plays a role in outer membrane invagination during cell division and is important for maintaining outer membrane integrity. In Wolinella succinogenes (strain ATCC 29543 / DSM 1740 / CCUG 13145 / JCM 31913 / LMG 7466 / NCTC 11488 / FDC 602W) (Vibrio succinogenes), this protein is Tol-Pal system protein TolB.